A 495-amino-acid polypeptide reads, in one-letter code: Probable staphylococcal-like nuclease CAN4 (495 aa).

A lipid anchor (N-myristoyl glycine) is attached at Gly-2. The S-palmitoyl cysteine moiety is linked to residue Cys-11. 2 disordered regions span residues 45–68 and 81–101; these read DLQV…RPAL and LQVP…PPRP. Positions 50–66 are enriched in pro residues; sequence LSPPPPSTRQQQPPPRP. The TNase-like domain occupies 297-470; that stretch reads KTLPVNAKCI…RDARQGLWAY (174 aa). Ca(2+) is bound at residue Asp-310. Arg-377 is an active-site residue. Residue Asp-382 coordinates Ca(2+). Active-site residues include Glu-385 and Arg-419.

It belongs to the thermonuclease family. Ca(2+) is required as a cofactor.

It is found in the cell membrane. Enzyme that catalyzes the hydrolysis of both DNA and RNA at the 5' position of the phosphodiester bond. This chain is Probable staphylococcal-like nuclease CAN4, found in Oryza sativa subsp. japonica (Rice).